The primary structure comprises 313 residues: Olfactory receptor 1G1 (313 aa).

Over 1–25 the chain is Extracellular; sequence MEGKNLTSISEFFLLGFSEQLEEQK. A glycan (N-linked (GlcNAc...) asparagine) is linked at Asn-5. Residues 26–49 form a helical membrane-spanning segment; sequence ALFGSFLFMYLVTVAGNLLIILVI. Residues 50–57 are Cytoplasmic-facing; it reads ITDTQLHT. A helical membrane pass occupies residues 58–79; sequence PMYFFLANLSLADACFVSTTVP. At 80–100 the chain is on the extracellular side; the sequence is KMLANIQIQSQAISYSGCLLQ. A disulfide bond links Cys-97 and Cys-189. Residues 101 to 120 traverse the membrane as a helical segment; it reads LYFFMLFVMLEAFLLAVMAY. Over 121 to 140 the chain is Cytoplasmic; sequence DRYVAICHPLHYILIMSPGL. A helical membrane pass occupies residues 141 to 158; the sequence is CVFLVSASWIMNALHSLL. Over 159–196 the chain is Extracellular; sequence HTLLMNSLSFCANHEIPHFFCDIDPLLSLSCTDPFTNE. Residues 197–219 traverse the membrane as a helical segment; it reads LVIFITGGLTGLVCVLCLIISYT. The Cytoplasmic portion of the chain corresponds to 220–236; sequence NIFSTILKIPSAQGKRK. The chain crosses the membrane as a helical span at residues 237–259; sequence AFSTCGSHLSVVSLFFGTSFCVY. Over 260–272 the chain is Extracellular; the sequence is FIPPSTRSAQKDT. Residues 273 to 292 form a helical membrane-spanning segment; that stretch reads VASVMYTVVTPMLNPFIYSL. Residues 293–313 lie on the Cytoplasmic side of the membrane; sequence RNQEIKSSLRKLIWVREIHSP.

This sequence belongs to the G-protein coupled receptor 1 family.

The protein localises to the cell membrane. Its function is as follows. Odorant receptor. This chain is Olfactory receptor 1G1 (OR1G1), found in Gorilla gorilla gorilla (Western lowland gorilla).